Reading from the N-terminus, the 209-residue chain is Nascent polypeptide-associated complex subunit alpha-like protein 5 (209 aa).

The disordered stretch occupies residues 23–71 (EKEDDVVVEDVKDGEEEDDDEDDEDVEVEGEGGNENAKQSRSEKKSRKA). Residues 25 to 54 (EDDVVVEDVKDGEEEDDDEDDEDVEVEGEG) show a composition bias toward acidic residues. The 66-residue stretch at 62–127 (SRSEKKSRKA…AKVDDLSSQL (66 aa)) folds into the NAC-A/B domain. The UBA domain maps to 170–207 (VEARDIDLVMTQAGVSKAKAVSALKANDGDIVSAIMEL).

Belongs to the NAC-alpha family.

In terms of biological role, may promote appropriate targeting of ribosome-nascent polypeptide complexes. In Arabidopsis thaliana (Mouse-ear cress), this protein is Nascent polypeptide-associated complex subunit alpha-like protein 5.